A 239-amino-acid chain; its full sequence is tRNA (guanine-N(7)-)-methyltransferase (239 aa).

The S-adenosyl-L-methionine site is built by E68, E93, D120, and D143. Residue D143 is part of the active site. Substrate-binding positions include K147, D180, and T217–E220.

Belongs to the class I-like SAM-binding methyltransferase superfamily. TrmB family.

It catalyses the reaction guanosine(46) in tRNA + S-adenosyl-L-methionine = N(7)-methylguanosine(46) in tRNA + S-adenosyl-L-homocysteine. It participates in tRNA modification; N(7)-methylguanine-tRNA biosynthesis. Its function is as follows. Catalyzes the formation of N(7)-methylguanine at position 46 (m7G46) in tRNA. This chain is tRNA (guanine-N(7)-)-methyltransferase, found in Vibrio vulnificus (strain CMCP6).